The primary structure comprises 56 residues: Large ribosomal subunit protein bL32 (56 aa).

The span at 1-16 shows a compositional bias: basic residues; that stretch reads MAVQKSKKSRSMRGMR. The segment at 1–21 is disordered; the sequence is MAVQKSKKSRSMRGMRRSHDA.

The protein belongs to the bacterial ribosomal protein bL32 family.

The sequence is that of Large ribosomal subunit protein bL32 from Vibrio atlanticus (strain LGP32) (Vibrio splendidus (strain Mel32)).